The sequence spans 465 residues: Probable citrate synthase, mitochondrial (465 aa).

Residues His-303, His-349, and Asp-404 contribute to the active site.

This sequence belongs to the citrate synthase family. As to quaternary structure, homodimer.

The protein resides in the mitochondrion matrix. It catalyses the reaction oxaloacetate + acetyl-CoA + H2O = citrate + CoA + H(+). It functions in the pathway carbohydrate metabolism; tricarboxylic acid cycle; isocitrate from oxaloacetate: step 1/2. The sequence is that of Probable citrate synthase, mitochondrial from Glossina morsitans morsitans (Savannah tsetse fly).